A 156-amino-acid polypeptide reads, in one-letter code: ATP synthase subunit b (156 aa).

Residues 3-23 form a helical membrane-spanning segment; that stretch reads ITLTIFAQALAFAGLIWIVAT.

It belongs to the ATPase B chain family. F-type ATPases have 2 components, F(1) - the catalytic core - and F(0) - the membrane proton channel. F(1) has five subunits: alpha(3), beta(3), gamma(1), delta(1), epsilon(1). F(0) has three main subunits: a(1), b(2) and c(10-14). The alpha and beta chains form an alternating ring which encloses part of the gamma chain. F(1) is attached to F(0) by a central stalk formed by the gamma and epsilon chains, while a peripheral stalk is formed by the delta and b chains.

It is found in the cell inner membrane. Its function is as follows. F(1)F(0) ATP synthase produces ATP from ADP in the presence of a proton or sodium gradient. F-type ATPases consist of two structural domains, F(1) containing the extramembraneous catalytic core and F(0) containing the membrane proton channel, linked together by a central stalk and a peripheral stalk. During catalysis, ATP synthesis in the catalytic domain of F(1) is coupled via a rotary mechanism of the central stalk subunits to proton translocation. Functionally, component of the F(0) channel, it forms part of the peripheral stalk, linking F(1) to F(0). This is ATP synthase subunit b from Xanthomonas axonopodis pv. citri (strain 306).